Consider the following 273-residue polypeptide: Tryptophan synthase alpha chain (273 aa).

Active-site proton acceptor residues include Glu56 and Asp67.

The protein belongs to the TrpA family. Tetramer of two alpha and two beta chains.

The enzyme catalyses (1S,2R)-1-C-(indol-3-yl)glycerol 3-phosphate + L-serine = D-glyceraldehyde 3-phosphate + L-tryptophan + H2O. The protein operates within amino-acid biosynthesis; L-tryptophan biosynthesis; L-tryptophan from chorismate: step 5/5. In terms of biological role, the alpha subunit is responsible for the aldol cleavage of indoleglycerol phosphate to indole and glyceraldehyde 3-phosphate. This Shewanella baltica (strain OS185) protein is Tryptophan synthase alpha chain.